Consider the following 170-residue polypeptide: Peptide deformylase 1 (170 aa).

Fe cation contacts are provided by Cys91 and His133. The active site involves Glu134. His137 provides a ligand contact to Fe cation.

This sequence belongs to the polypeptide deformylase family. Fe(2+) serves as cofactor.

It carries out the reaction N-terminal N-formyl-L-methionyl-[peptide] + H2O = N-terminal L-methionyl-[peptide] + formate. Functionally, removes the formyl group from the N-terminal Met of newly synthesized proteins. Requires at least a dipeptide for an efficient rate of reaction. N-terminal L-methionine is a prerequisite for activity but the enzyme has broad specificity at other positions. This chain is Peptide deformylase 1, found in Vibrio vulnificus (strain CMCP6).